Consider the following 367-residue polypeptide: MSERILTINPGSTSTKIGIFDGTEQVFTKTLRHSAEAVGGPLSDQLNIRRQVVLDVLAQEQIDLKALTAIVGRGGLLRPLVSGTYRVNQEMREDLLNGTFGIHASNLGGLLADEIGQTLSIPAFIVDPVVVDELEPIARLTGLPELERKSIFHALNQKAVAKRYAKENGIPYEQLRLIVAHMGGGITVGAHLNGRVIDVNNGLDGEGAFSPERSGSLPVGQLVELCYSTKYKLEEMKRLVVGSGGLVAHLGTYDAVEIERRIDDGDEKAALLYEAMAYRVAKEIAAQSAVLYGQVDAVILTGGLAYSDRLTKAIEERIAHIGSIIRIPGEDELRALAEGVIRVLRQEEQVKEYGGELTWLENSTSLS.

The protein belongs to the acetokinase family.

The protein localises to the cytoplasm. The catalysed reaction is butanoate + ATP = butanoyl phosphate + ADP. The chain is Probable butyrate kinase from Exiguobacterium sibiricum (strain DSM 17290 / CCUG 55495 / CIP 109462 / JCM 13490 / 255-15).